Consider the following 484-residue polypeptide: Protein nucleotidyltransferase YdiU (484 aa).

Residues Gly81, Gly83, Arg84, Lys103, Asp115, Gly116, Arg166, and Arg173 each contribute to the ATP site. The active-site Proton acceptor is the Asp244. Residues Asn245 and Asp254 each contribute to the Mg(2+) site. ATP is bound at residue Asp254.

It belongs to the SELO family. Mg(2+) serves as cofactor. It depends on Mn(2+) as a cofactor.

It catalyses the reaction L-seryl-[protein] + ATP = 3-O-(5'-adenylyl)-L-seryl-[protein] + diphosphate. It carries out the reaction L-threonyl-[protein] + ATP = 3-O-(5'-adenylyl)-L-threonyl-[protein] + diphosphate. The enzyme catalyses L-tyrosyl-[protein] + ATP = O-(5'-adenylyl)-L-tyrosyl-[protein] + diphosphate. The catalysed reaction is L-histidyl-[protein] + UTP = N(tele)-(5'-uridylyl)-L-histidyl-[protein] + diphosphate. It catalyses the reaction L-seryl-[protein] + UTP = O-(5'-uridylyl)-L-seryl-[protein] + diphosphate. It carries out the reaction L-tyrosyl-[protein] + UTP = O-(5'-uridylyl)-L-tyrosyl-[protein] + diphosphate. Functionally, nucleotidyltransferase involved in the post-translational modification of proteins. It can catalyze the addition of adenosine monophosphate (AMP) or uridine monophosphate (UMP) to a protein, resulting in modifications known as AMPylation and UMPylation. This Shewanella oneidensis (strain ATCC 700550 / JCM 31522 / CIP 106686 / LMG 19005 / NCIMB 14063 / MR-1) protein is Protein nucleotidyltransferase YdiU.